The chain runs to 852 residues: DNA mismatch repair protein MutS (852 aa).

602 to 609 (GPNMSGKS) serves as a coordination point for ATP.

The protein belongs to the DNA mismatch repair MutS family.

Its function is as follows. This protein is involved in the repair of mismatches in DNA. It is possible that it carries out the mismatch recognition step. This protein has a weak ATPase activity. This is DNA mismatch repair protein MutS from Streptococcus thermophilus (strain ATCC BAA-491 / LMD-9).